The sequence spans 285 residues: Meiotically up-regulated gene 74 protein (285 aa).

The protein resides in the cytoplasm. Functionally, has a role in meiosis. In Schizosaccharomyces pombe (strain 972 / ATCC 24843) (Fission yeast), this protein is Meiotically up-regulated gene 74 protein (mug74).